We begin with the raw amino-acid sequence, 493 residues long: Cytochrome P450 monooxygenase astA (493 aa).

A helical membrane pass occupies residues 5–25 (EIILLGLAALAVTYQVIVWIY). Residues N174 and N286 are each glycosylated (N-linked (GlcNAc...) asparagine). C433 is a binding site for heme.

It belongs to the cytochrome P450 family. Requires heme as cofactor.

The protein localises to the membrane. It carries out the reaction asperterpenoid A + reduced [NADPH--hemoprotein reductase] + O2 = asperterpenoid C + oxidized [NADPH--hemoprotein reductase] + H2O + H(+). The protein operates within secondary metabolite biosynthesis; terpenoid biosynthesis. Its function is as follows. Cytochrome P450 monooxygenase; part of the gene cluster that mediates the biosynthesis of the asperterpenoids, sesterterpenes that exhibit anti-tuberculosis activity. The first step of the pathway is performed by the sesterterpene synthase astC that possesses both prenyl transferase and terpene cyclase activity, converting isopentenyl diphosphate and dimethylallyl diphosphate into geranylfarnesyl diphosphate (GFPP) and further converting GFPP into preasperterpenoid A, respectively. The cytochrome P450 monooxygenase astB then dually oxidizes preasperterpenoid A to produce asperterpenoid A along with a minor product, asperterpenoid B. Finally, the cytochrome P450 monooxygenase astA converts asperterpenoid A into asperterpenoid C. The polypeptide is Cytochrome P450 monooxygenase astA (Talaromyces wortmannii (Penicillium wortmannii)).